Reading from the N-terminus, the 118-residue chain is uncharacterized protein (118 aa).

The helical transmembrane segment at 7–27 (LLTGLFVGGIIGGAAVLLTAP) threads the bilayer. Residues 31 to 118 (KQLREKMKTN…IRQLEKTLQN (88 aa)) adopt a coiled-coil conformation.

It is found in the cell membrane. This is an uncharacterized protein from Bacillus subtilis (strain 168).